Consider the following 695-residue polypeptide: MAQLDTLDLVVLVVLLVGSAAYFTKGTYWAVPKDPYAASGPAMNGGAKAGKSRDIIEKMEETGKNCVIFYGSQTGTAEDYASRLAKEGSQRFGLKTMVADLEDYDYENLDKFPEDKVAFFVMATYGEGEPTDNAVEFYQFISGEDVAFESGASADDKPLSSLKYVTFGLGNNTYEHYQAMVRNLDAALTKLGAQRIGDAGEGDDGAGTMEEDFLAWKEPMWTALSEAMNLQEREAVYEPVFSVTEDESLSPEDEAVYLGEPTKGHRDGTPSGPYSAHNPFIAPIVESRELFNVKDRNCLHMEISIAGSNLSYQTGDHIAIWPTNAGAEVDRFLQVFGLENKRHSVINIKGIDVTAKVPIPTPTTYDAAVRYYMEIAAPVSRQFVATLAAFAPDEETKAEIVRLGSDKDYFHEKISNQCFTIAQALQSVTSKPFSAVPFSLLIEGLNKLQPRYYSISSSSMVQKDKISITAVVESTRLPGAAHLVKGVTTNYLLALKQKQNGDPSPDPHGLTYTITGPRNKYDGIHVPVHVRHSNFKLPSDPSRPIIMVGPGTGVAPFRGFIQERAALAAKGENVGPTVLFFGCRRRDEDFMYADEFKTYQEQLGDKLQIITAFSRETSQKVYVQHRLREHSDLVSSLLKQKANFYVCGDAANMAREVNLVLGQIIAQQRGLPAERAEEMVKHMRSSGSYQEDVWS.

Over 1–8 (MAQLDTLD) the chain is Lumenal. The helical transmembrane segment at 9 to 31 (LVVLVVLLVGSAAYFTKGTYWAV) threads the bilayer. Residues 32-695 (PKDPYAASGP…SGSYQEDVWS (664 aa)) are Cytoplasmic-facing. Residues 66 to 221 (CVIFYGSQTG…DFLAWKEPMW (156 aa)) enclose the Flavodoxin-like domain. FMN contacts are provided by residues 72 to 77 (SQTGTA), 123 to 126 (ATYG), 169 to 178 (LGNNTYEHYQ), and D204. One can recognise an FAD-binding FR-type domain in the interval 277–538 (HNPFIAPIVE…HVRHSNFKLP (262 aa)). NADP(+) is bound at residue R296. Residues 451–454 (RYYS), 469–471 (TAV), and 486–489 (GVTT) each bind FAD. NADP(+) contacts are provided by residues T552, 614 to 615 (SR), 620 to 624 (KVYVQ), and E656. W694 provides a ligand contact to FAD.

This sequence belongs to the NADPH--cytochrome P450 reductase family. The protein in the N-terminal section; belongs to the flavodoxin family. In the C-terminal section; belongs to the flavoprotein pyridine nucleotide cytochrome reductase family. It depends on FAD as a cofactor. FMN serves as cofactor.

Its subcellular location is the endoplasmic reticulum membrane. The protein localises to the mitochondrion outer membrane. The protein resides in the cell membrane. The catalysed reaction is 2 oxidized [cytochrome P450] + NADPH = 2 reduced [cytochrome P450] + NADP(+) + H(+). This enzyme is required for electron transfer from NADP to cytochrome P450 in microsomes. It can also provide electron transfer to heme oxygenase and cytochrome B5. Involved in ergosterol biosynthesis. This chain is NADPH--cytochrome P450 reductase, found in Aspergillus terreus (strain NIH 2624 / FGSC A1156).